A 507-amino-acid polypeptide reads, in one-letter code: Protein FAM221B (507 aa).

3 disordered regions span residues 1–100 (MEAD…SAQS), 154–310 (LLSP…ESRP), and 486–507 (ETKRRGKRPYGTNTAKNRHRPF). The span at 88-100 (NLPSTPSQSSAQS) shows a compositional bias: polar residues. Positions 167–177 (SISDVQEEPLE) are enriched in acidic residues. Polar residues predominate over residues 182 to 193 (ADISETEYSISD). 2 stretches are compositionally biased toward acidic residues: residues 208–222 (PESEDYISDDHEEPL) and 270–281 (SADEEEAEEEEL). Ser-270 carries the post-translational modification Phosphoserine.

This sequence belongs to the FAM221 family.

The chain is Protein FAM221B (Fam221b) from Rattus norvegicus (Rat).